The primary structure comprises 171 residues: AAF/I fimbrial subunit (171 aa).

Positions 1–28 are cleaved as a signal peptide; sequence MKTLKNMRRKNLCITLGLVSLLSRGANA.

The protein localises to the fimbrium. In Escherichia coli, this protein is AAF/I fimbrial subunit (aggA).